We begin with the raw amino-acid sequence, 457 residues long: Peptidyl-prolyl cis-trans isomerase FKBP5 (457 aa).

At Met1 the chain carries N-acetylmethionine. The span at 1-11 shows a compositional bias: basic and acidic residues; sequence MTTDEGAKNNE. Residues 1–24 form a disordered region; it reads MTTDEGAKNNEESPTATVAEQGED. Residue Ser13 is modified to Phosphoserine. The residue at position 28 (Lys28) is an N6-acetyllysine. The PPIase FKBP-type 1 domain occupies 42 to 130; sequence NGEETPMIGD…KIPSNATLFF (89 aa). Position 155 is an N6-acetyllysine (Lys155). Residues 157–243 enclose the PPIase FKBP-type 2 domain; sequence EGYSNPNEGA…GIEPNAELIY (87 aa). 3 TPR repeats span residues 268–301, 317–350, and 351–384; these read AAIV…LEME, LAAF…DSAN, and EKGL…NPQN. The segment at 420–457 is disordered; that stretch reads DAKEEANKAMGKKTSEGVTNEKGTDSQAMEEEKPEGHV. Phosphoserine is present on Ser445.

As to quaternary structure, part of a heteromultimeric cytoplasmic complex with HSP90AA1, HSPA1A/HSPA1B and steroid receptors. Upon ligand binding dissociates from the complex and FKBP4 takes its place. Interacts with functionally mature heterooligomeric progesterone receptor complexes along with HSP90 and TEBP. Interacts with NR3C1. Interacts with Akt/AKT1 and PHLPP1; enhancing dephosphorylation and subsequent activation of Akt/AKT1. Interacts with IFI44L; this interaction modulates the kinase activity of IKBKB and IKBKE. Interacts with IKBKB and IKBKE. Post-translationally, acetylation impairs ability to promote interaction between Akt/AKT1 and PHLPP1. Deacetylation by SIRT7 promotes interaction between Akt/AKT1 and PHLPP1, leading to suppress Akt/AKT1 activation. Ubiquitinated, leading to degradation in a proteasome-dependent manner. Deubiquitinated by USP49, leading to stabilization. In terms of tissue distribution, widely expressed, enriched in testis compared to other tissues.

The protein localises to the cytoplasm. It localises to the nucleus. The enzyme catalyses [protein]-peptidylproline (omega=180) = [protein]-peptidylproline (omega=0). Inhibited by both FK506 and rapamycin. In terms of biological role, immunophilin protein with PPIase and co-chaperone activities. Component of unligated steroid receptors heterocomplexes through interaction with heat-shock protein 90 (HSP90). Plays a role in the intracellular trafficking of heterooligomeric forms of steroid hormone receptors maintaining the complex into the cytoplasm when unliganded. Acts as a regulator of Akt/AKT1 activity by promoting the interaction between Akt/AKT1 and PHLPP1, thereby enhancing dephosphorylation and subsequent activation of Akt/AKT1. Interacts with IKBKE and IKBKB which facilitates IKK complex assembly leading to increased IKBKE and IKBKB kinase activity, NF-kappa-B activation, and IFN production. The polypeptide is Peptidyl-prolyl cis-trans isomerase FKBP5 (FKBP5) (Homo sapiens (Human)).